A 609-amino-acid chain; its full sequence is 2',5'-phosphodiesterase 12 (609 aa).

Residues 1–42 (MWRLPGARAALRVIRTAVEKLSRAEAGSQTAAGAMERAVVRC) constitute a mitochondrion transit peptide. Residues 89–99 (AAAAKKSRKSR) show a composition bias toward basic residues. 2 disordered regions span residues 89-111 (AAAAKKSRKSRPNASGGAACSGP) and 206-230 (AEPEVGVPSSLSPSSPSSSWTETDV). Low complexity-rich tracts occupy residues 100–111 (PNASGGAACSGP) and 213–224 (PSSLSPSSPSSS). Phosphoserine is present on Ser-217. Residues Glu-351, Asp-496, and Asn-498 each contribute to the Mg(2+) site. Asp-496 (proton donor/acceptor) is an active-site residue.

The protein belongs to the CCR4/nocturin family. It depends on Mg(2+) as a cofactor. As to expression, ubiquitous.

The protein resides in the mitochondrion matrix. The enzyme catalyses Exonucleolytic cleavage of poly(A) to 5'-AMP.. Its function is as follows. Enzyme that cleaves 2',5'-phosphodiester bond linking adenosines of the 5'-triphosphorylated oligoadenylates, triphosphorylated oligoadenylates referred as 2-5A modulates the 2-5A system. Degrades triphosphorylated 2-5A to produce AMP and ATP. Also cleaves 3',5'-phosphodiester bond of oligoadenylates. Plays a role as a negative regulator of the 2-5A system that is one of the major pathways for antiviral and antitumor functions induced by interferons (IFNs). Suppression of this enzyme increases cellular 2-5A levels and decreases viral replication in cultured small-airway epithelial cells and Hela cells. The polypeptide is 2',5'-phosphodiesterase 12 (PDE12) (Homo sapiens (Human)).